The chain runs to 200 residues: MDRTGIFAGDDPFAIAAGWLAEAEPQEPNDPNAIALATVDAAGLPNVRMVLLKEIEAEAFVFYTNYGSQKAVEIETSGKAAFVLHWKSLRRQIRVRGLVEREEGVQADAYYASRSLKSRLGAWASEQSRPLASRTSLLAEVARVTARFGTNPPRPAFWGGFRIRPLEIEFWADGAFRLHDRFRWRRNSLSDGWSIERLNP.

FMN is bound by residues 48–53, 63–64, Lys-70, and Gln-92; these read RMVLLK and YT. Lys-53 serves as a coordination point for substrate. Tyr-110, Arg-114, and Ser-118 together coordinate substrate. Residues 127-128 and Trp-171 contribute to the FMN site; that span reads QS. 177-179 is a binding site for substrate; sequence RLH. Residue Arg-181 coordinates FMN.

The protein belongs to the pyridoxamine 5'-phosphate oxidase family. In terms of assembly, homodimer. FMN is required as a cofactor.

The enzyme catalyses pyridoxamine 5'-phosphate + O2 + H2O = pyridoxal 5'-phosphate + H2O2 + NH4(+). It carries out the reaction pyridoxine 5'-phosphate + O2 = pyridoxal 5'-phosphate + H2O2. It participates in cofactor metabolism; pyridoxal 5'-phosphate salvage; pyridoxal 5'-phosphate from pyridoxamine 5'-phosphate: step 1/1. Its pathway is cofactor metabolism; pyridoxal 5'-phosphate salvage; pyridoxal 5'-phosphate from pyridoxine 5'-phosphate: step 1/1. In terms of biological role, catalyzes the oxidation of either pyridoxine 5'-phosphate (PNP) or pyridoxamine 5'-phosphate (PMP) into pyridoxal 5'-phosphate (PLP). The chain is Pyridoxine/pyridoxamine 5'-phosphate oxidase from Cereibacter sphaeroides (strain ATCC 17029 / ATH 2.4.9) (Rhodobacter sphaeroides).